The chain runs to 353 residues: Photosystem II protein D1 (353 aa).

Thr2 carries the post-translational modification N-acetylthreonine. A Phosphothreonine modification is found at Thr2. The next 3 membrane-spanning stretches (helical) occupy residues 29-46 (YIGW…TATS), 118-133 (HFLL…EWEL), and 142-156 (WIAV…AATA). A chlorophyll a-binding site is contributed by His118. Position 126 (Tyr126) interacts with pheophytin a. [CaMn4O5] cluster is bound by residues Asp170 and Glu189. The helical transmembrane segment at 197–218 (FHMLGVAGVFGGSLFSAMHGSL) threads the bilayer. His198 provides a ligand contact to chlorophyll a. Residues His215 and 264-265 (SF) each bind a quinone. A Fe cation-binding site is contributed by His215. Residue His272 coordinates Fe cation. The helical transmembrane segment at 274–288 (FLAAWPVVGIWFTAL) threads the bilayer. [CaMn4O5] cluster contacts are provided by His332, Glu333, Asp342, and Ala344. A propeptide spanning residues 345–353 (GVEVPSTNG) is cleaved from the precursor.

It belongs to the reaction center PufL/M/PsbA/D family. PSII is composed of 1 copy each of membrane proteins PsbA, PsbB, PsbC, PsbD, PsbE, PsbF, PsbH, PsbI, PsbJ, PsbK, PsbL, PsbM, PsbT, PsbX, PsbY, PsbZ, Psb30/Ycf12, at least 3 peripheral proteins of the oxygen-evolving complex and a large number of cofactors. It forms dimeric complexes. The cofactor is The D1/D2 heterodimer binds P680, chlorophylls that are the primary electron donor of PSII, and subsequent electron acceptors. It shares a non-heme iron and each subunit binds pheophytin, quinone, additional chlorophylls, carotenoids and lipids. D1 provides most of the ligands for the Mn4-Ca-O5 cluster of the oxygen-evolving complex (OEC). There is also a Cl(-1) ion associated with D1 and D2, which is required for oxygen evolution. The PSII complex binds additional chlorophylls, carotenoids and specific lipids.. In terms of processing, tyr-161 forms a radical intermediate that is referred to as redox-active TyrZ, YZ or Y-Z. C-terminally processed by CTPA; processing is essential to allow assembly of the oxygen-evolving complex and thus photosynthetic growth.

It localises to the plastid. The protein resides in the chloroplast thylakoid membrane. The enzyme catalyses 2 a plastoquinone + 4 hnu + 2 H2O = 2 a plastoquinol + O2. In terms of biological role, photosystem II (PSII) is a light-driven water:plastoquinone oxidoreductase that uses light energy to abstract electrons from H(2)O, generating O(2) and a proton gradient subsequently used for ATP formation. It consists of a core antenna complex that captures photons, and an electron transfer chain that converts photonic excitation into a charge separation. The D1/D2 (PsbA/PsbD) reaction center heterodimer binds P680, the primary electron donor of PSII as well as several subsequent electron acceptors. The chain is Photosystem II protein D1 from Morus indica (Mulberry).